We begin with the raw amino-acid sequence, 144 residues long: uncharacterized protein (144 aa).

Positions 1–23 (MRKILLFATVIGFLIMVSGTLSY) are cleaved as a signal peptide.

This is an uncharacterized protein from Archaeoglobus fulgidus (strain ATCC 49558 / DSM 4304 / JCM 9628 / NBRC 100126 / VC-16).